Reading from the N-terminus, the 159-residue chain is NADH-quinone oxidoreductase subunit I (159 aa).

4Fe-4S ferredoxin-type domains are found at residues 51–80 and 90–119; these read RRYENGEERCIACKLCEAICPAQAIVIEAD and TRYDIDMTKCIYCGLCQEACPVDAIVEGPN. 8 residues coordinate [4Fe-4S] cluster: Cys60, Cys63, Cys66, Cys70, Cys99, Cys102, Cys105, and Cys109.

It belongs to the complex I 23 kDa subunit family. In terms of assembly, NDH-1 is composed of 14 different subunits. Subunits NuoA, H, J, K, L, M, N constitute the membrane sector of the complex. [4Fe-4S] cluster serves as cofactor.

The protein resides in the cell inner membrane. The catalysed reaction is a quinone + NADH + 5 H(+)(in) = a quinol + NAD(+) + 4 H(+)(out). Its function is as follows. NDH-1 shuttles electrons from NADH, via FMN and iron-sulfur (Fe-S) centers, to quinones in the respiratory chain. The immediate electron acceptor for the enzyme in this species is believed to be ubiquinone. Couples the redox reaction to proton translocation (for every two electrons transferred, four hydrogen ions are translocated across the cytoplasmic membrane), and thus conserves the redox energy in a proton gradient. The chain is NADH-quinone oxidoreductase subunit I from Rickettsia felis (strain ATCC VR-1525 / URRWXCal2) (Rickettsia azadi).